The chain runs to 447 residues: C4-dicarboxylate transport protein 3 (447 aa).

8 helical membrane passes run 5–27 (TLGK…GVAA), 42–64 (IKLI…IARM), 77–99 (ALVY…VNLV), 146–165 (LARN…GIAL), 186–208 (VFSI…MAFT), 223–245 (LMAT…VARL), 315–337 (IFVA…LGVL), and 352–374 (FITL…VLLL).

Belongs to the dicarboxylate/amino acid:cation symporter (DAACS) (TC 2.A.23) family.

The protein resides in the cell inner membrane. Its function is as follows. Responsible for the transport of dicarboxylates such as succinate, fumarate, and malate from the periplasm across the membrane. This is C4-dicarboxylate transport protein 3 (dctA3) from Ralstonia nicotianae (strain ATCC BAA-1114 / GMI1000) (Ralstonia solanacearum).